Here is a 240-residue protein sequence, read N- to C-terminus: Histidinol dehydrogenase homolog oryD (240 aa).

2 residues coordinate Zn(2+): Gln-64 and His-67. Glu-134 (proton acceptor) is an active-site residue. Residues Asp-168 and His-228 each coordinate Zn(2+).

Belongs to the histidinol dehydrogenase family. Requires Zn(2+) as cofactor.

It functions in the pathway secondary metabolite biosynthesis. Its function is as follows. Histidinol dehydrogenase homolog; part of the gene cluster that mediates the biosynthesis of oryzines, natural products with an unusual maleidride backbone. The two subunits of the fungal fatty acid synthase oryfasA and oryfasB probably form octenoic acid. This fatty acid is most likely activated by the acyl-CoA ligase oryP to give octenyl-CoA before the citrate synthase-like protein oryE catalyzes condensation with oxaloacetate to form tricarboxylic acid. The next steps of the pathways are conjectural, but a favorite possible route has been proposed, beginning with decarboxylation and concomitant dehydration by the decarboxylase oryM, followed by tautomerization, which may lead to the production of a diene intermediate. Reduction of this diene intermediate could give the known metabolite piliformic acid. On the pathway to oryzine B and oryzine A, however, hydroxylation of the diene by the alpha-ketoglutarate-dependent dioxygenase oryG and lactonisation by the lactonohydrolases oryH or oryL could give oryzine B directly. Finally, enoyl reduction by the dehydrogenase oryD would then convert oryzine B into oryzine A. This chain is Histidinol dehydrogenase homolog oryD, found in Aspergillus oryzae (strain ATCC 42149 / RIB 40) (Yellow koji mold).